The following is a 484-amino-acid chain: MAKDIRVRYAPSPTGLLHIGNARTALFNYLYARHHGGTFIIRIEDTDRKRHVEDGERSQLDNLRWLGIDWDESPETHENYRQSERLPLYQKYIDQLLAEGKAYKSYVTEEELAAERERQEAAGETPRYINEFLGMTEEEKAAYIAEREAAGIIPTVRLAVNESGIYKWHDIVKGDIEFEGGNIGGDWVIQKRDGYPTYNFAVVVDDHDMQISHVIRGDDHIANTPKQLMVYEALGWEAPEFGHMTLITNSETGKKLSKRDTNTLQFIEDYRKKGYLPEAVFNFIALLGWNPGGEDEIFSREELIKLFDENRLSKSPAAFDQKKLDWMSNDYIKHADFDKVFALCKPFLEEAGRLTDKAEKLVELYKPQMTAAEEIVPLTDLFFEDFPELTAAEKEVMAGETVPTVLEAFKAKLEAMSDDEFVTENIFSQIKAVQKETGIKGKNLFMPIRIAVSGEMHGPELPETIFLLGREKSIKHIDQVLATL.

The short motif at 11 to 21 (PSPTGLLHIGN) is the 'HIGH' region element. Positions 255–259 (KLSKR) match the 'KMSKS' region motif. Lysine 258 lines the ATP pocket.

The protein belongs to the class-I aminoacyl-tRNA synthetase family. Glutamate--tRNA ligase type 1 subfamily. As to quaternary structure, monomer.

It is found in the cytoplasm. It catalyses the reaction tRNA(Glu) + L-glutamate + ATP = L-glutamyl-tRNA(Glu) + AMP + diphosphate. Its function is as follows. Catalyzes the attachment of glutamate to tRNA(Glu) in a two-step reaction: glutamate is first activated by ATP to form Glu-AMP and then transferred to the acceptor end of tRNA(Glu). This Streptococcus thermophilus (strain CNRZ 1066) protein is Glutamate--tRNA ligase.